Reading from the N-terminus, the 366-residue chain is Palmitoyltransferase ZDHHC2 (366 aa).

At 1–15 (MAPSGSGGVRRRCRR) the chain is on the cytoplasmic side. A helical transmembrane segment spans residues 16 to 36 (VLYWIPVVFISLLLGWSYYAY). Over 37–47 (AIQLCIVSMEN) the chain is Lumenal. Residues 48–68 (IGEQVVCLMAYHLLFAMFVWS) traverse the membrane as a helical segment. Topologically, residues 69 to 169 (YWKTIFTLPM…NNCVGFSNYK (101 aa)) are cytoplasmic. A DHHC domain is found at 126-176 (RYCDRCQLIKPDRCHHCSVCDKCILKMDHHCPWVNNCVGFSNYKFFLLFLA). Catalysis depends on Cys156, which acts as the S-palmitoyl cysteine intermediate. Residues 170–190 (FFLLFLAYSLLYCLFIAATDL) form a helical membrane-spanning segment. Over 191 to 207 (QYFIRFWTNGLPDTQAK) the chain is Lumenal. The chain crosses the membrane as a helical span at residues 208–228 (FHIMFLFFAAAMFSVSLSSLF). Topologically, residues 229 to 366 (GYHCWLVSKN…NPALTMENET (138 aa)) are cytoplasmic. Positions 297 to 316 (VNQDPEQPSTPAGLNSTVKN) are enriched in polar residues. The disordered stretch occupies residues 297 to 366 (VNQDPEQPST…NPALTMENET (70 aa)). Residues 298-366 (NQDPEQPSTP…NPALTMENET (69 aa)) form a mediates localization to plasma membrane and recycling endosomes region. Over residues 326–336 (PLRESQSHLLK) the composition is skewed to basic and acidic residues. A Non-canonical dileucine endocytic signal motif is present at residues 334–335 (LL). The span at 337 to 347 (DSQTWTESSAN) shows a compositional bias: polar residues. Residues 357–360 (NPAL) carry the NPxY-like endocytic signal motif.

It belongs to the DHHC palmitoyltransferase family. Monomer. Homodimer. The monomeric form has a higher catalytic activity. In terms of processing, autopalmitoylated. In terms of tissue distribution, expressed in all brain regions.

It localises to the postsynaptic density. Its subcellular location is the postsynaptic recycling endosome membrane. It is found in the cell membrane. The protein localises to the endoplasmic reticulum membrane. The protein resides in the golgi apparatus membrane. The catalysed reaction is L-cysteinyl-[protein] + hexadecanoyl-CoA = S-hexadecanoyl-L-cysteinyl-[protein] + CoA. It catalyses the reaction L-cysteinyl-[protein] + tetradecanoyl-CoA = S-tetradecanoyl-L-cysteinyl-[protein] + CoA. It carries out the reaction L-cysteinyl-[protein] + octadecanoyl-CoA = S-octadecanoyl-L-cysteinyl-[protein] + CoA. Its function is as follows. Palmitoyltransferase that catalyzes the addition of palmitate onto various protein substrates and is involved in a variety of cellular processes. Has no stringent fatty acid selectivity and in addition to palmitate can also transfer onto target proteins myristate from tetradecanoyl-CoA and stearate from octadecanoyl-CoA. In the nervous system, plays a role in long term synaptic potentiation by palmitoylating AKAP5 through which it regulates protein trafficking from the dendritic recycling endosomes to the plasma membrane and controls both structural and functional plasticity at excitatory synapses. In dendrites, mediates the palmitoylation of DLG4 when synaptic activity decreases and induces synaptic clustering of DLG4 and associated AMPA-type glutamate receptors. Also mediates the de novo and turnover palmitoylation of RGS7BP, a shuttle for Gi/o-specific GTPase-activating proteins/GAPs, promoting its localization to the plasma membrane in response to the activation of G protein-coupled receptors. Through the localization of these GTPase-activating proteins/GAPs, it also probably plays a role in G protein-coupled receptors signaling in neurons. Also probably plays a role in cell adhesion by palmitoylating CD9 and CD151 to regulate their expression and function. Palmitoylates the endoplasmic reticulum protein CKAP4 and regulates its localization to the plasma membrane. Could also palmitoylate LCK and regulate its localization to the plasma membrane. This Mus musculus (Mouse) protein is Palmitoyltransferase ZDHHC2.